The following is a 362-amino-acid chain: Adenosine deaminase (362 aa).

Positions 19 and 21 each coordinate Zn(2+). The substrate site is built by His-21, Asp-23, and Gly-181. Position 208 (His-208) interacts with Zn(2+). Residue Glu-211 is the Proton donor of the active site. A Zn(2+)-binding site is contributed by Asp-300.

Belongs to the metallo-dependent hydrolases superfamily. Adenosine and AMP deaminases family. Adenosine deaminase subfamily. Zn(2+) is required as a cofactor.

It catalyses the reaction adenosine + H2O + H(+) = inosine + NH4(+). It carries out the reaction 2'-deoxyadenosine + H2O + H(+) = 2'-deoxyinosine + NH4(+). Functionally, catalyzes the hydrolytic deamination of adenosine and 2-deoxyadenosine. The chain is Adenosine deaminase from Mycobacterium leprae (strain TN).